Consider the following 788-residue polypeptide: Endonuclease MutS2 (788 aa).

ATP is bound at residue 334–341 (GPNTGGKT). Residues 713–788 (LDLRGKRYEE…GNGATVVKFQ (76 aa)) enclose the Smr domain.

The protein belongs to the DNA mismatch repair MutS family. MutS2 subfamily. Homodimer. Binds to stalled ribosomes, contacting rRNA.

Functionally, endonuclease that is involved in the suppression of homologous recombination and thus may have a key role in the control of bacterial genetic diversity. Acts as a ribosome collision sensor, splitting the ribosome into its 2 subunits. Detects stalled/collided 70S ribosomes which it binds and splits by an ATP-hydrolysis driven conformational change. Acts upstream of the ribosome quality control system (RQC), a ribosome-associated complex that mediates the extraction of incompletely synthesized nascent chains from stalled ribosomes and their subsequent degradation. Probably generates substrates for RQC. In Enterococcus faecalis (strain ATCC 700802 / V583), this protein is Endonuclease MutS2.